The primary structure comprises 713 residues: Glycine--tRNA ligase beta subunit (713 aa).

It belongs to the class-II aminoacyl-tRNA synthetase family. In terms of assembly, tetramer of two alpha and two beta subunits.

The protein resides in the cytoplasm. The enzyme catalyses tRNA(Gly) + glycine + ATP = glycyl-tRNA(Gly) + AMP + diphosphate. The polypeptide is Glycine--tRNA ligase beta subunit (Leptothrix cholodnii (strain ATCC 51168 / LMG 8142 / SP-6) (Leptothrix discophora (strain SP-6))).